A 79-amino-acid chain; its full sequence is UPF0154 protein SSP1415 (79 aa).

A helical transmembrane segment spans residues 4–24; that stretch reads WLAIVLIVLALILGLVGGFFL.

This sequence belongs to the UPF0154 family.

It localises to the membrane. The chain is UPF0154 protein SSP1415 from Staphylococcus saprophyticus subsp. saprophyticus (strain ATCC 15305 / DSM 20229 / NCIMB 8711 / NCTC 7292 / S-41).